The sequence spans 206 residues: MELKVTTLEGKEAGSVQLSDAIFGLEPRQDIIARCVQWQLNKRQAGTHKAKGRAEIWRTGKKMYKQKGTGGARHGSARVPQFRGGGRAFGPVVRSHATDLPKKVRALALKHALSAKAKDGDLLVIDKAALEAAKTKALLGHFSGLGLTNALIIDGAELNNGFAAAARNIPNMDVLPIQGINVYDILRRQKLVLTKAAIDALEARFK.

The protein belongs to the universal ribosomal protein uL4 family. As to quaternary structure, part of the 50S ribosomal subunit.

In terms of biological role, one of the primary rRNA binding proteins, this protein initially binds near the 5'-end of the 23S rRNA. It is important during the early stages of 50S assembly. It makes multiple contacts with different domains of the 23S rRNA in the assembled 50S subunit and ribosome. Functionally, forms part of the polypeptide exit tunnel. This chain is Large ribosomal subunit protein uL4, found in Bradyrhizobium diazoefficiens (strain JCM 10833 / BCRC 13528 / IAM 13628 / NBRC 14792 / USDA 110).